A 395-amino-acid chain; its full sequence is Na(+)/H(+) antiporter NhaA (395 aa).

Helical transmembrane passes span 11-31, 61-81, 96-116, 127-147, 156-176, 179-199, 202-222, 264-284, 295-315, 331-351, and 366-386; these read FAME…ALII, LLLW…GLEV, IVLP…IYWF, GWAI…ALLG, LFLM…IAIF, GTLS…LVAM, MGVV…VCVL, FGIL…GVTL, IAVG…WMAV, VLGV…VGSL, and MGIL…TAAA.

Belongs to the NhaA Na(+)/H(+) (TC 2.A.33) antiporter family.

The protein resides in the cell inner membrane. It carries out the reaction Na(+)(in) + 2 H(+)(out) = Na(+)(out) + 2 H(+)(in). In terms of biological role, na(+)/H(+) antiporter that extrudes sodium in exchange for external protons. This Pseudomonas fluorescens (strain ATCC BAA-477 / NRRL B-23932 / Pf-5) protein is Na(+)/H(+) antiporter NhaA.